Consider the following 98-residue polypeptide: NADH-ubiquinone oxidoreductase chain 4L (98 aa).

Transmembrane regions (helical) follow at residues 1-21 (MTSI…GVLI), 28-48 (STLL…ALLI), and 59-79 (APLI…ALLV).

The protein belongs to the complex I subunit 4L family. As to quaternary structure, core subunit of respiratory chain NADH dehydrogenase (Complex I) which is composed of 45 different subunits.

Its subcellular location is the mitochondrion inner membrane. It carries out the reaction a ubiquinone + NADH + 5 H(+)(in) = a ubiquinol + NAD(+) + 4 H(+)(out). Core subunit of the mitochondrial membrane respiratory chain NADH dehydrogenase (Complex I) which catalyzes electron transfer from NADH through the respiratory chain, using ubiquinone as an electron acceptor. Part of the enzyme membrane arm which is embedded in the lipid bilayer and involved in proton translocation. In Vombatus ursinus (Common wombat), this protein is NADH-ubiquinone oxidoreductase chain 4L (MT-ND4L).